Here is a 242-residue protein sequence, read N- to C-terminus: uncharacterized protein (242 aa).

Disordered stretches follow at residues 16–121 and 152–178; these read GLYK…GAMA and PVRP…TQPV. Composition is skewed to pro residues over residues 50–64 and 97–113; these read PRPP…PSPA and EPRP…PPGP. The segment covering 157 to 172 has biased composition (basic residues); it reads KLPKGKGRLRRPRQSR. Thr-175 bears the Phosphothreonine mark. Phosphoserine is present on residues Ser-192, Ser-206, Ser-216, Ser-232, and Ser-238. Positions 215 to 242 are disordered; it reads QSLSLQREPLGSCKLRNSLDSSDSDSAL. Low complexity predominate over residues 232 to 242; it reads SLDSSDSDSAL.

Its subcellular location is the cytoplasm. This is an uncharacterized protein from Rattus norvegicus (Rat).